The chain runs to 63 residues: U-reduvitoxin-Pr9a (63 aa).

The signal sequence occupies residues 1–19; sequence MRFFSLFTFLVAFIAAALA. Residues 20-42 constitute a propeptide that is removed on maturation; the sequence is APVEIGEDLFALRPTGAKRDIIL. A disulfide bond links Cys-47 and Cys-60.

As to expression, expressed by the venom gland.

It localises to the secreted. The polypeptide is U-reduvitoxin-Pr9a (Platymeris rhadamanthus (Red spot assassin bug)).